A 796-amino-acid chain; its full sequence is Protein translocase subunit SecA 2 (796 aa).

Residues glutamine 84, 102–106, and aspartate 496 contribute to the ATP site; that span reads GEGKT.

It belongs to the SecA family. Monomer and homodimer. Part of the essential Sec protein translocation apparatus which comprises SecA, SecYEG and auxiliary proteins SecDF. Other proteins may also be involved.

Its subcellular location is the cell membrane. It is found in the cytoplasm. The catalysed reaction is ATP + H2O + cellular proteinSide 1 = ADP + phosphate + cellular proteinSide 2.. Part of the Sec protein translocase complex. Interacts with the SecYEG preprotein conducting channel. Has a central role in coupling the hydrolysis of ATP to the transfer of proteins into and across the cell membrane, serving as an ATP-driven molecular motor driving the stepwise translocation of polypeptide chains across the membrane. The polypeptide is Protein translocase subunit SecA 2 (Staphylococcus aureus (strain MSSA476)).